The chain runs to 306 residues: Prophage bactoprenol glucosyl transferase homolog (306 aa).

The Cytoplasmic segment spans residues 1–227 (MKISLVVPVF…ITSFSTFPLR (227 aa)). Residues 228-248 (IWTYIGLVVASVAFIYGAWMI) traverse the membrane as a helical segment. Over 249 to 262 (LDTIIFGNAVRGYP) the chain is Periplasmic. Residues 263–283 (SLLVSILFLGGIQMIGIGVLG) traverse the membrane as a helical segment. The Cytoplasmic segment spans residues 284 to 306 (EYIGRTYIETKKRPKYIIKRVKK).

The protein belongs to the glycosyltransferase 2 family. GtrB subfamily.

The protein localises to the cell inner membrane. Involved in O antigen modification. Catalyzes the transfer of the glucose residue from UDP-glucose to a lipid carrier. The polypeptide is Prophage bactoprenol glucosyl transferase homolog (yfdH) (Escherichia coli (strain K12)).